The primary structure comprises 512 residues: Cytochrome P450 77A4 (512 aa).

Residues 9–29 (PTSLDFTFFAIIISGFVFIIT) form a helical membrane-spanning segment. C456 is a heme binding site.

The protein belongs to the cytochrome P450 family. It depends on heme as a cofactor.

The protein resides in the membrane. Its function is as follows. Catalyzes the epoxidation of physiological unsaturated fatty acids in vitro. Can use laurate, oleate, linoleate, linolenate and vernolate as substrate. The polypeptide is Cytochrome P450 77A4 (CYP77A4) (Arabidopsis thaliana (Mouse-ear cress)).